A 544-amino-acid polypeptide reads, in one-letter code: CTP synthase (544 aa).

The segment at 1–265 is amidoligase domain; sequence MTKFIFVTGG…DNIITEQLQL (265 aa). Ser-13 contributes to the CTP binding site. Residue Ser-13 participates in UTP binding. ATP is bound by residues 14–19 and Asp-71; that span reads SLGKGI. Residues Asp-71 and Glu-139 each contribute to the Mg(2+) site. Residues 146-148, 186-191, and Lys-222 each bind CTP; these read DIE and KTKPTQ. UTP-binding positions include 186–191 and Lys-222; that span reads KTKPTQ. Positions 290-544 constitute a Glutamine amidotransferase type-1 domain; the sequence is KIAMVGKYVD…VKAALNNKKA (255 aa). L-glutamine is bound at residue Gly-353. Residue Cys-380 is the Nucleophile; for glutamine hydrolysis of the active site. Residues 381-384, Glu-404, and Arg-471 contribute to the L-glutamine site; that span reads LGMQ. Residues His-517 and Glu-519 contribute to the active site.

It belongs to the CTP synthase family. Homotetramer.

It carries out the reaction UTP + L-glutamine + ATP + H2O = CTP + L-glutamate + ADP + phosphate + 2 H(+). The catalysed reaction is L-glutamine + H2O = L-glutamate + NH4(+). The enzyme catalyses UTP + NH4(+) + ATP = CTP + ADP + phosphate + 2 H(+). Its pathway is pyrimidine metabolism; CTP biosynthesis via de novo pathway; CTP from UDP: step 2/2. Its activity is regulated as follows. Allosterically activated by GTP, when glutamine is the substrate; GTP has no effect on the reaction when ammonia is the substrate. The allosteric effector GTP functions by stabilizing the protein conformation that binds the tetrahedral intermediate(s) formed during glutamine hydrolysis. Inhibited by the product CTP, via allosteric rather than competitive inhibition. Catalyzes the ATP-dependent amination of UTP to CTP with either L-glutamine or ammonia as the source of nitrogen. Regulates intracellular CTP levels through interactions with the four ribonucleotide triphosphates. The polypeptide is CTP synthase (Neisseria meningitidis serogroup C / serotype 2a (strain ATCC 700532 / DSM 15464 / FAM18)).